The following is a 145-amino-acid chain: Large ribosomal subunit protein uL15 (145 aa).

The disordered stretch occupies residues 1-52 (MKLNTIAPAEGSKKDRRRVGRGIGSGFGKTAGRGHKGQHARSGGYHKVGFEG). Residues 21–31 (RGIGSGFGKTA) show a composition bias toward gly residues.

Belongs to the universal ribosomal protein uL15 family. In terms of assembly, part of the 50S ribosomal subunit.

In terms of biological role, binds to the 23S rRNA. The sequence is that of Large ribosomal subunit protein uL15 from Acidithiobacillus ferrooxidans (strain ATCC 53993 / BNL-5-31) (Leptospirillum ferrooxidans (ATCC 53993)).